Here is a 436-residue protein sequence, read N- to C-terminus: MRQALPLVTRQGDRIAIVSGLRTPFARQATAFHGIPAVDLGKMVVGELLARSEIPADAIEQLVFGQVVQMPEAPNIAREIVLGTGMNVHTDAYSVSRACATSFQAVANVAESLMAGTIRAGIAGGADSSSVLPIGVSKALARVLVDVNKARTTRQRLTLFSRLRLRDLLPVPPAVAEYSTGLRMGDTAEQMAKTYGITREQQDALAHRSHQRAAQAWAEGKLAEEVMTTYVPPYKNPFAEDNNIRGASTLADYAKLRPAFDRKHGSVTAANSTPLTDGAAAVIMMTESRAKELGLRPLGYLRSYAFTAIDVWQDMLLGPAWSTPLALERAGLTMADLTLFDMHEAFAAQTLANLQLLGSERFAREVLGRAQATGEVDDAKFNVLGGSIAYGHPFAATGARMITQTLHELRRRGGGFGLVTACAAGGLGAAMVLEAE.

Catalysis depends on cysteine 99, which acts as the Acyl-thioester intermediate. Catalysis depends on proton acceptor residues histidine 392 and cysteine 422.

The protein belongs to the thiolase-like superfamily. Thiolase family. Heterotetramer of two alpha chains (FadJ) and two beta chains (FadI).

The protein resides in the cytoplasm. The enzyme catalyses an acyl-CoA + acetyl-CoA = a 3-oxoacyl-CoA + CoA. Its pathway is lipid metabolism; fatty acid beta-oxidation. In terms of biological role, catalyzes the final step of fatty acid oxidation in which acetyl-CoA is released and the CoA ester of a fatty acid two carbons shorter is formed. This is 3-ketoacyl-CoA thiolase from Salmonella dublin (strain CT_02021853).